Consider the following 645-residue polypeptide: Chaperone protein DnaK (645 aa).

Position 201 is a phosphothreonine; by autocatalysis (threonine 201). The span at 606–629 (NTNNATAGDNNTTDTGSSSNSDGS) shows a compositional bias: low complexity. The interval 606–645 (NTNNATAGDNNTTDTGSSSNSDGSKVVDSDYQEIDKKDGK) is disordered. Basic and acidic residues predominate over residues 630–645 (KVVDSDYQEIDKKDGK).

It belongs to the heat shock protein 70 family.

In terms of biological role, acts as a chaperone. The sequence is that of Chaperone protein DnaK from Ehrlichia ruminantium (strain Gardel).